Here is a 78-residue protein sequence, read N- to C-terminus: Large ribosomal subunit protein bL28 (78 aa).

Residues 1–21 form a disordered region; sequence MSRVCQVTGKRPVSGNNRSHA.

This sequence belongs to the bacterial ribosomal protein bL28 family.

This chain is Large ribosomal subunit protein bL28, found in Sodalis glossinidius (strain morsitans).